The following is a 468-amino-acid chain: MNLSLSDLHRQVSRLVQQESGDCTGKLRGNVAANKETTFQGLTIASGARESEKVFAQTVLSHVANVVLTQEDTAKLLQSTVKHNLNNYDLRSVGNGNSVLVSLRSDQMTLQDAKVLLEAALRQESGARGHVSSHSHSALHAPGTPVREGLRSHLDPRTPPLPPRERPHTSGHHGAGEARATAPSTVSPYGPEARAELSSRLTTLRNTLAPATNDPRYLQACGGEKLNRFRDIQCCRQTAVRADLNANYIQVGNTRTIACQYPLQSQLESHFRMLAENRTPVLAVLASSSEIANQRFGMPDYFRQSGTYGSITVESKMTQQVGLGDGIMADMYTLTIREAGQKTISVPVVHVGNWPDQTAVSSEVTKALASLVDQTAETKRNMYESKGSSAVGDDSKLRPVIHCRAGVGRTAQLIGAMCMNDSRNSQLSVEDMVSQMRVQRNGIMVQKDEQLDVLIKLAEGQGRPLLNS.

Residues 127–194 (ARGHVSSHSH…TVSPYGPEAR (68 aa)) form a disordered region. Residues 130-141 (HVSSHSHSALHA) are compositionally biased toward low complexity. The Tyrosine-protein phosphatase domain occupies 152 to 461 (SHLDPRTPPL…DVLIKLAEGQ (310 aa)). Cys403 functions as the Phosphocysteine intermediate in the catalytic mechanism.

Belongs to the protein-tyrosine phosphatase family. Non-receptor class subfamily.

It localises to the secreted. The catalysed reaction is O-phospho-L-tyrosyl-[protein] + H2O = L-tyrosyl-[protein] + phosphate. Essential virulence determinant. This protein is a protein tyrosine phosphatase. The essential function of YopH in Yersinia pathogenesis is host-protein dephosphorylation. It contributes to the ability of the bacteria to resist phagocytosis by peritoneal macrophages. The polypeptide is Tyrosine-protein phosphatase YopH (yopH) (Yersinia pseudotuberculosis serotype I (strain IP32953)).